Here is a 248-residue protein sequence, read N- to C-terminus: PF03932 family protein CutC (248 aa).

The protein belongs to the CutC family. Homodimer.

The protein localises to the cytoplasm. The sequence is that of PF03932 family protein CutC from Escherichia coli O127:H6 (strain E2348/69 / EPEC).